Reading from the N-terminus, the 488-residue chain is Malonate-semialdehyde dehydrogenase (488 aa).

NAD(+) contacts are provided by A150, F152, K176, E179, R180, S229, and T251. C284 functions as the Nucleophile in the catalytic mechanism. E382 provides a ligand contact to NAD(+).

It belongs to the aldehyde dehydrogenase family. IolA subfamily. As to quaternary structure, homotetramer.

The catalysed reaction is 3-oxopropanoate + NAD(+) + CoA + H2O = hydrogencarbonate + acetyl-CoA + NADH + H(+). It carries out the reaction 2-methyl-3-oxopropanoate + NAD(+) + CoA + H2O = propanoyl-CoA + hydrogencarbonate + NADH + H(+). It participates in polyol metabolism; myo-inositol degradation into acetyl-CoA; acetyl-CoA from myo-inositol: step 7/7. Functionally, catalyzes the oxidation of malonate semialdehyde (MSA) and methylmalonate semialdehyde (MMSA) into acetyl-CoA and propanoyl-CoA, respectively. Is involved in a myo-inositol catabolic pathway. Bicarbonate, and not CO2, is the end-product of the enzymatic reaction. In Listeria monocytogenes serovar 1/2a (strain ATCC BAA-679 / EGD-e), this protein is Malonate-semialdehyde dehydrogenase.